Consider the following 430-residue polypeptide: UDP-N-acetylmuramoylalanine--D-glutamate ligase (430 aa).

109 to 115 is a binding site for ATP; the sequence is GTDGKST.

It belongs to the MurCDEF family.

It is found in the cytoplasm. The enzyme catalyses UDP-N-acetyl-alpha-D-muramoyl-L-alanine + D-glutamate + ATP = UDP-N-acetyl-alpha-D-muramoyl-L-alanyl-D-glutamate + ADP + phosphate + H(+). Its pathway is cell wall biogenesis; peptidoglycan biosynthesis. Its function is as follows. Cell wall formation. Catalyzes the addition of glutamate to the nucleotide precursor UDP-N-acetylmuramoyl-L-alanine (UMA). The polypeptide is UDP-N-acetylmuramoylalanine--D-glutamate ligase (Thermotoga sp. (strain RQ2)).